A 490-amino-acid polypeptide reads, in one-letter code: GTPase Der (490 aa).

2 consecutive EngA-type G domains span residues 3–166 and 203–376; these read PVVA…MDDV and IKLA…DSST. GTP is bound by residues 9–16, 56–60, 118–121, 209–216, 256–260, and 321–324; these read GRPNVGKS, DTGGI, NKTD, DTAGV, and NKWD. The 85-residue stretch at 377 to 461 folds into the KH-like domain; that stretch reads RRVSTAMLTR…PIRIQFKEGE (85 aa).

It belongs to the TRAFAC class TrmE-Era-EngA-EngB-Septin-like GTPase superfamily. EngA (Der) GTPase family. As to quaternary structure, associates with the 50S ribosomal subunit.

GTPase that plays an essential role in the late steps of ribosome biogenesis. This is GTPase Der from Salmonella enteritidis PT4 (strain P125109).